Here is a 365-residue protein sequence, read N- to C-terminus: Putative clathrin assembly protein At4g40080 (365 aa).

An ENTH domain is found at 29–167 (NTKSKTLSFH…STSRIMGFFI (139 aa)).

The protein resides in the membrane. The protein localises to the clathrin-coated pit. Its subcellular location is the golgi apparatus. It is found in the cytoplasmic vesicle. It localises to the clathrin-coated vesicle. The sequence is that of Putative clathrin assembly protein At4g40080 from Arabidopsis thaliana (Mouse-ear cress).